Here is a 210-residue protein sequence, read N- to C-terminus: Na(+)-translocating NADH-quinone reductase subunit D (210 aa).

Transmembrane regions (helical) follow at residues 42–62 (FVMTLAVTAVTAFSNLFISLI), 72–92 (IIAQMAVIASLVIVVDQVLKA), 103–123 (VFVGLIITNCIVMGRAEAYAM), 131–151 (FLDGIGNGLGYGAVLLTVATV), and 178–198 (NGLLLLPPSAFFIIGLIIWGV).

The protein belongs to the NqrDE/RnfAE family. Composed of six subunits; NqrA, NqrB, NqrC, NqrD, NqrE and NqrF.

Its subcellular location is the cell inner membrane. The enzyme catalyses a ubiquinone + n Na(+)(in) + NADH + H(+) = a ubiquinol + n Na(+)(out) + NAD(+). Its function is as follows. NQR complex catalyzes the reduction of ubiquinone-1 to ubiquinol by two successive reactions, coupled with the transport of Na(+) ions from the cytoplasm to the periplasm. NqrA to NqrE are probably involved in the second step, the conversion of ubisemiquinone to ubiquinol. This Aeromonas hydrophila subsp. hydrophila (strain ATCC 7966 / DSM 30187 / BCRC 13018 / CCUG 14551 / JCM 1027 / KCTC 2358 / NCIMB 9240 / NCTC 8049) protein is Na(+)-translocating NADH-quinone reductase subunit D.